Reading from the N-terminus, the 368-residue chain is Methionine import ATP-binding protein MetN (368 aa).

The span at 1–14 shows a compositional bias: polar residues; it reads MASDAQPSVDQPSA. The tract at residues 1–27 is disordered; sequence MASDAQPSVDQPSAGTPGATGNSTGTT. Residues 15–27 are compositionally biased toward low complexity; the sequence is GTPGATGNSTGTT. In terms of domain architecture, ABC transporter spans 31 to 270; it reads IVFRDVTKIF…PQTKTAANFV (240 aa). An ATP-binding site is contributed by 67-74; it reads GYSGAGKS.

It belongs to the ABC transporter superfamily. Methionine importer (TC 3.A.1.24) family. In terms of assembly, the complex is composed of two ATP-binding proteins (MetN), two transmembrane proteins (MetI) and a solute-binding protein (MetQ).

It is found in the cell membrane. The enzyme catalyses L-methionine(out) + ATP + H2O = L-methionine(in) + ADP + phosphate + H(+). It carries out the reaction D-methionine(out) + ATP + H2O = D-methionine(in) + ADP + phosphate + H(+). In terms of biological role, part of the ABC transporter complex MetNIQ involved in methionine import. Responsible for energy coupling to the transport system. The chain is Methionine import ATP-binding protein MetN from Corynebacterium jeikeium (strain K411).